Reading from the N-terminus, the 231-residue chain is MKKTLLASSLAVGLGIVAGNAGHEAQASEADLNKASLAQMAQSNDQTLNQKPIEAGAYNYTFDYEGFTYHFESDGTHFAWNYHATGANGADMSAQAPATNNVAPSADQSNQVQSQEVEAPQNAQTQQPQASTSNNSQVTATPTESKASEGSSVNVNDHLKQIAQRESGGNIHAVNPTSGAAGKYQFLQSTWDSVAPAKYKGVSPANAPESVQDAAAVKLYNTGGAGHWVTA.

The signal sequence occupies residues 1–27 (MKKTLLASSLAVGLGIVAGNAGHEAQA). The disordered stretch occupies residues 92-153 (MSAQAPATNN…ESKASEGSSV (62 aa)). The span at 96–116 (APATNNVAPSADQSNQVQSQE) shows a compositional bias: polar residues. The segment covering 119 to 137 (APQNAQTQQPQASTSNNSQ) has biased composition (low complexity). Residues 138-153 (VTATPTESKASEGSSV) show a composition bias toward polar residues.

This sequence belongs to the transglycosylase family. SceD subfamily.

It localises to the secreted. Functionally, is able to cleave peptidoglycan and affects clumping and separation of bacterial cells. In Staphylococcus aureus (strain MRSA252), this protein is Probable transglycosylase SceD (sceD).